The sequence spans 527 residues: Nucleobase-ascorbate transporter LPE1 (527 aa).

A run of 12 helical transmembrane segments spans residues 43–63 (LVML…MGGG), 68–88 (AIVI…QVHF), 92–112 (LPAV…IILS), 132–152 (LQGA…FGIW), 163–183 (AAVP…FPGV), 189–209 (VGLP…HLFA), 219–239 (AVLV…AAGA), 284–304 (FAML…LIAV), 361–383 (VIKI…AVLA), 387–409 (LPIF…FSLL), 427–447 (LFLG…FGFG), and 458–478 (VMVN…AYLL).

It belongs to the nucleobase:cation symporter-2 (NCS2) (TC 2.A.40) family. As to expression, highly expressed in roots.

Its subcellular location is the membrane. Inhibited by excess of xanthin, uric acid and ascorbic acid, and by 100 um N,N-dicyclohexylcarbodiimide and 30 um carbonyl cyanide m-chlorophenyl-hydrazone. Its function is as follows. High affinity uric acid-xanthine transporter in A.nidulans. Binds, but cannot transport ascorbic acid. The sequence is that of Nucleobase-ascorbate transporter LPE1 (LPE1) from Zea mays (Maize).